The following is a 372-amino-acid chain: Nickel transporter NicT (372 aa).

Transmembrane regions (helical) follow at residues 30–50, 55–75, 104–124, 152–172, 218–238, 245–265, 294–314, and 335–355; these read LMFAVIVALHLVGWLTVTLLV, LSLGGKAFGIGVGLTAYTLGL, VGFFFSLGHSTVVFGLAVMLV, ISGAFLYLIGILNVIVLVGIV, VGFLFGLGFDTATEIALLVLA, GLPWYAILCLPVLFAAGMCLL, VTGLSVAVALLIGSVELLGLI, and TVGFVVVAMFALTWAIALLVW.

The protein belongs to the NiCoT transporter (TC 2.A.52) family.

Its subcellular location is the cell membrane. The enzyme catalyses Ni(2+)(in) = Ni(2+)(out). With respect to regulation, export of the fluoroquinolone antibiotic norfloxacin is inhibited by the proton ionophore carbonyl cyanide m-chlorophenylhydrazone (CCCP). Nickel may influence the extrusion of antibiotics possibly by facilitating the proton motive force-dependent efflux process. Involved in nickel uptake. In addition, acts as a drug efflux pump and contributes to moderate tolerance towards different classes of antibiotics, including fluoroquinolones, aminoglycosides and the anti-TB drug isoniazid, with a preference for fluoroquinolones. The drug efflux function is probably dependent on proton motive force (pmf) or ion gradient, and might be facilitated by the presence of Ni(2+) ions. This Mycobacterium tuberculosis (strain ATCC 25618 / H37Rv) protein is Nickel transporter NicT.